Consider the following 189-residue polypeptide: MAMAAAASLLPACAAPTLPGRAFRPRRNSTPTASLSCDGGSRGRGVGLGVILGGGRAQGVRRNAAAETYVPGSGKYIAPDYLVKKVTAKELEELVRGERKVPLIVDFYATWCGPCVLMAQDIEMLAVEYENNALFVKVDTDDEYELARDMQVRGLPTLYFFSPDQSKDALRTEGLIPIDMIRNIIDNEL.

The transit peptide at 1 to 36 (MAMAAAASLLPACAAPTLPGRAFRPRRNSTPTASLS) directs the protein to the chloroplast. In terms of domain architecture, Thioredoxin spans 72–189 (GSGKYIAPDY…MIRNIIDNEL (118 aa)). Catalysis depends on nucleophile residues cysteine 112 and cysteine 115. Cysteine 112 and cysteine 115 are oxidised to a cystine.

This sequence belongs to the thioredoxin family. Plant CITRX-type subfamily.

The protein localises to the plastid. The protein resides in the chloroplast. Functionally, probable thiol-disulfide oxidoreductase that may play a role in proper chloroplast development. This Oryza sativa subsp. indica (Rice) protein is Thioredoxin-like protein CITRX, chloroplastic.